The chain runs to 182 residues: Inner membrane assembly complex subunit 17 (182 aa).

A mitochondrion-targeting transit peptide spans 1–45 (MLKRRSNALITLSRTKLFPITTVAYYHRRLLNQQRRAVSTSPKKE). Over 46–107 (IKSLEDLANL…EIPVKRFIRP (62 aa)) the chain is Mitochondrial matrix. A helical transmembrane segment spans residues 108-127 (LWMFILMGSSVYLLLHFSWW). Residues 128–158 (KLEHEERESQLKKEVEILEHQLNELIIQDKT) adopt a coiled-coil conformation. Residues 128-182 (KLEHEERESQLKKEVEILEHQLNELIIQDKTHNTSRGKGSNESTHMKPWYRRWFW) are Mitochondrial intermembrane-facing.

It belongs to the INA17 family. In terms of assembly, component of the inner membrane assembly (INA) complex, composed of INA17 and INA22. Interacts with a subset of F(1)F(0)-ATP synthase subunits of the F(1)-domain and the peripheral stalk.

It is found in the mitochondrion inner membrane. In terms of biological role, component of the INA complex (INAC) that promotes the biogenesis of mitochondrial F(1)F(0)-ATP synthase. INAC facilitates the assembly of the peripheral stalk and promotes the assembly of the catalytic F(1)-domain with the membrane-embedded F(0)-domain. The polypeptide is Inner membrane assembly complex subunit 17 (Saccharomyces cerevisiae (strain YJM789) (Baker's yeast)).